The primary structure comprises 780 residues: Myosin heavy chain kinase C (780 aa).

The Alpha-type protein kinase domain occupies 40–243 (IGDDLKPKWT…VCDFLKLKPI (204 aa)). The disordered stretch occupies residues 310 to 495 (RIRAQQQQKS…MEQTPDRSEF (186 aa)). Low complexity predominate over residues 337 to 350 (QQSPSSPTSKPVPQ). Residues 353 to 376 (KTPSQSNVVNKSPVSPPKENSNVK) are compositionally biased toward polar residues. Over residues 380–436 (DNINNNNSSISSNNDNSNNNNNNNDNINNSSNSSSVNSNSSSVSSSSSSSSSSSSSS) the composition is skewed to low complexity. Residues 437–450 (TTNAAPISIQVSRN) are compositionally biased toward polar residues. Over residues 458 to 488 (IQPSSAAASASSTSSSNVPTPESTSTSSMEQ) the composition is skewed to low complexity. 6 WD repeats span residues 507 to 546 (DTVRGLQSECITGDSLRLYSGSNDGQIGVWDAVELKHVTN), 549 to 589 (AHGK…TIKE), 591 to 628 (KESNEVNTIFIQDNLLYTGCNDKTVKVWDMRSYECVKT), 631 to 668 (GHTRAIKSVCAMGNLLFSGSNDQQIYVWNLATGTILTN), 671 to 708 (GHEGWVKTLYAHNNMLYSGSHDETIRIWDLKTTRCVNT), and 748 to 780 (NTRSSILCLWRNQNQLFTGSLASNLKVWSWDKM).

The protein belongs to the protein kinase superfamily. Alpha-type protein kinase family. ALPK subfamily. In terms of assembly, interacts with myosin II heavy chain (mhcA). Post-translationally, autophosphorylated in vitro.

It localises to the cytoplasm. Its subcellular location is the cell cortex. The protein localises to the membrane. The protein resides in the cleavage furrow. The catalysed reaction is L-threonyl-[myosin heavy-chain] + ATP = O-phospho-L-threonyl-[myosin heavy-chain] + ADP + H(+). Functionally, phosphorylates threonine at 'Thr-1823', 'Thr-1833' and 'Thr-2029' in the C-terminal tail region of myosin II heavy chain (mhcA). This phosphorylation is critical in actin-activated ATPase activity of the myosin and regulating the assembly and disassembly of myosin II filament. In vitro, catalytic domain phosphorylates mhcA, myelin basic protein, myosin regulatory light chain, casein and caldesmon. Drives the disassembly of myosin II filaments for efficient cytokinesis and recycling of myosin II that occurs during late cytokinesis. Can be activated in vitro by autophosphorylation. The polypeptide is Myosin heavy chain kinase C (mhkC) (Dictyostelium discoideum (Social amoeba)).